Consider the following 173-residue polypeptide: Crossover junction endodeoxyribonuclease RuvC (173 aa).

Catalysis depends on residues D8, E67, and D139. 3 residues coordinate Mg(2+): D8, E67, and D139.

It belongs to the RuvC family. In terms of assembly, homodimer which binds Holliday junction (HJ) DNA. The HJ becomes 2-fold symmetrical on binding to RuvC with unstacked arms; it has a different conformation from HJ DNA in complex with RuvA. In the full resolvosome a probable DNA-RuvA(4)-RuvB(12)-RuvC(2) complex forms which resolves the HJ. Mg(2+) is required as a cofactor.

The protein resides in the cytoplasm. It carries out the reaction Endonucleolytic cleavage at a junction such as a reciprocal single-stranded crossover between two homologous DNA duplexes (Holliday junction).. Functionally, the RuvA-RuvB-RuvC complex processes Holliday junction (HJ) DNA during genetic recombination and DNA repair. Endonuclease that resolves HJ intermediates. Cleaves cruciform DNA by making single-stranded nicks across the HJ at symmetrical positions within the homologous arms, yielding a 5'-phosphate and a 3'-hydroxyl group; requires a central core of homology in the junction. The consensus cleavage sequence is 5'-(A/T)TT(C/G)-3'. Cleavage occurs on the 3'-side of the TT dinucleotide at the point of strand exchange. HJ branch migration catalyzed by RuvA-RuvB allows RuvC to scan DNA until it finds its consensus sequence, where it cleaves and resolves the cruciform DNA. This Shewanella oneidensis (strain ATCC 700550 / JCM 31522 / CIP 106686 / LMG 19005 / NCIMB 14063 / MR-1) protein is Crossover junction endodeoxyribonuclease RuvC.